We begin with the raw amino-acid sequence, 188 residues long: Elongation factor P-like protein (188 aa).

Belongs to the elongation factor P family.

This Aliivibrio fischeri (strain MJ11) (Vibrio fischeri) protein is Elongation factor P-like protein.